A 382-amino-acid polypeptide reads, in one-letter code: Histidinol-phosphate aminotransferase (382 aa).

The residue at position 215 (lysine 215) is an N6-(pyridoxal phosphate)lysine. The disordered stretch occupies residues 363-382 (NIDNQSKTHSQTSSIRKGTI).

Belongs to the class-II pyridoxal-phosphate-dependent aminotransferase family. Histidinol-phosphate aminotransferase subfamily. Homodimer. Requires pyridoxal 5'-phosphate as cofactor.

It carries out the reaction L-histidinol phosphate + 2-oxoglutarate = 3-(imidazol-4-yl)-2-oxopropyl phosphate + L-glutamate. The protein operates within amino-acid biosynthesis; L-histidine biosynthesis; L-histidine from 5-phospho-alpha-D-ribose 1-diphosphate: step 7/9. The protein is Histidinol-phosphate aminotransferase of Yersinia pseudotuberculosis serotype O:3 (strain YPIII).